The sequence spans 608 residues: Glutamyl-tRNA(Gln) amidotransferase subunit E (608 aa).

This sequence belongs to the GatB/GatE family. GatE subfamily. In terms of assembly, heterodimer of GatD and GatE.

The catalysed reaction is L-glutamyl-tRNA(Gln) + L-glutamine + ATP + H2O = L-glutaminyl-tRNA(Gln) + L-glutamate + ADP + phosphate + H(+). Functionally, allows the formation of correctly charged Gln-tRNA(Gln) through the transamidation of misacylated Glu-tRNA(Gln) in organisms which lack glutaminyl-tRNA synthetase. The reaction takes place in the presence of glutamine and ATP through an activated gamma-phospho-Glu-tRNA(Gln). The GatDE system is specific for glutamate and does not act on aspartate. The sequence is that of Glutamyl-tRNA(Gln) amidotransferase subunit E from Pyrobaculum aerophilum (strain ATCC 51768 / DSM 7523 / JCM 9630 / CIP 104966 / NBRC 100827 / IM2).